Here is a 456-residue protein sequence, read N- to C-terminus: Glutamate--tRNA ligase 2 (456 aa).

The 'HIGH' region signature appears at 8 to 18 (PSPTGYIHIGN). The 'KMSKS' region signature appears at 249 to 253 (GLSKR). Lys252 serves as a coordination point for ATP.

Belongs to the class-I aminoacyl-tRNA synthetase family. Glutamate--tRNA ligase type 1 subfamily. In terms of assembly, monomer.

It localises to the cytoplasm. It carries out the reaction tRNA(Glu) + L-glutamate + ATP = L-glutamyl-tRNA(Glu) + AMP + diphosphate. In terms of biological role, catalyzes the attachment of glutamate to tRNA(Glu) in a two-step reaction: glutamate is first activated by ATP to form Glu-AMP and then transferred to the acceptor end of tRNA(Glu). In Bartonella bacilliformis (strain ATCC 35685 / KC583 / Herrer 020/F12,63), this protein is Glutamate--tRNA ligase 2.